A 169-amino-acid polypeptide reads, in one-letter code: uncharacterized protein (169 aa).

This is an uncharacterized protein from Saccharomyces cerevisiae (strain ATCC 204508 / S288c) (Baker's yeast).